A 360-amino-acid chain; its full sequence is Phospho-N-acetylmuramoyl-pentapeptide-transferase (360 aa).

10 helical membrane-spanning segments follow: residues Ala-26–Arg-46, Gly-70–Trp-90, Phe-97–Tyr-117, Phe-134–Ala-154, Val-168–Ser-188, Gly-199–Ser-219, Val-236–Phe-256, Val-263–Val-283, Ile-288–Val-308, and Val-338–Lys-358.

This sequence belongs to the glycosyltransferase 4 family. MraY subfamily. Mg(2+) serves as cofactor.

The protein resides in the cell inner membrane. It catalyses the reaction UDP-N-acetyl-alpha-D-muramoyl-L-alanyl-gamma-D-glutamyl-meso-2,6-diaminopimeloyl-D-alanyl-D-alanine + di-trans,octa-cis-undecaprenyl phosphate = di-trans,octa-cis-undecaprenyl diphospho-N-acetyl-alpha-D-muramoyl-L-alanyl-D-glutamyl-meso-2,6-diaminopimeloyl-D-alanyl-D-alanine + UMP. It participates in cell wall biogenesis; peptidoglycan biosynthesis. In terms of biological role, catalyzes the initial step of the lipid cycle reactions in the biosynthesis of the cell wall peptidoglycan: transfers peptidoglycan precursor phospho-MurNAc-pentapeptide from UDP-MurNAc-pentapeptide onto the lipid carrier undecaprenyl phosphate, yielding undecaprenyl-pyrophosphoryl-MurNAc-pentapeptide, known as lipid I. This chain is Phospho-N-acetylmuramoyl-pentapeptide-transferase, found in Thioalkalivibrio sulfidiphilus (strain HL-EbGR7).